Reading from the N-terminus, the 483-residue chain is Regulatory protein ViaA (483 aa).

It belongs to the ViaA family. In terms of assembly, homodimer. Interacts with RavA.

It is found in the cytoplasm. Its function is as follows. Component of the RavA-ViaA chaperone complex, which may act on the membrane to optimize the function of some of the respiratory chains. ViaA stimulates the ATPase activity of RavA. The polypeptide is Regulatory protein ViaA (Escherichia coli O7:K1 (strain IAI39 / ExPEC)).